The primary structure comprises 248 residues: Segregation and condensation protein A (248 aa).

This sequence belongs to the ScpA family. As to quaternary structure, component of a cohesin-like complex composed of ScpA, ScpB and the Smc homodimer, in which ScpA and ScpB bind to the head domain of Smc. The presence of the three proteins is required for the association of the complex with DNA.

The protein resides in the cytoplasm. Participates in chromosomal partition during cell division. May act via the formation of a condensin-like complex containing Smc and ScpB that pull DNA away from mid-cell into both cell halves. This chain is Segregation and condensation protein A, found in Clostridium perfringens (strain ATCC 13124 / DSM 756 / JCM 1290 / NCIMB 6125 / NCTC 8237 / Type A).